Here is a 761-residue protein sequence, read N- to C-terminus: Ribonucleoside-diphosphate reductase subunit alpha (761 aa).

One can recognise an ATP-cone domain in the interval 5–95 (LFVTKRDGRK…IFHLRKKAYG (91 aa)). ATP is bound by residues lysine 9, 15–21 (EKINLDK), threonine 55, and lysine 91. Threonine 209 provides a ligand contact to GDP. A disulfide bond links cysteine 225 and cysteine 462. DTTP-binding positions include 232–234 (DSL), arginine 262, and arginine 269. Asparagine 437 contacts GDP. Asparagine 437 serves as the catalytic Proton acceptor. Residue cysteine 439 is the Cysteine radical intermediate of the active site. GDP is bound by residues glutamate 441 and 623–625 (ETS). Glutamate 441 (proton acceptor) is an active-site residue.

It belongs to the ribonucleoside diphosphate reductase large chain family. As to quaternary structure, tetramer of two alpha and two beta subunits.

The enzyme catalyses a 2'-deoxyribonucleoside 5'-diphosphate + [thioredoxin]-disulfide + H2O = a ribonucleoside 5'-diphosphate + [thioredoxin]-dithiol. With respect to regulation, under complex allosteric control mediated by deoxynucleoside triphosphates and ATP binding to separate specificity and activation sites on the alpha subunit. The type of nucleotide bound at the specificity site determines substrate preference. It seems probable that ATP makes the enzyme reduce CDP and UDP, dGTP favors ADP reduction and dTTP favors GDP reduction. Stimulated by ATP and inhibited by dATP binding to the activity site. Functionally, provides the precursors necessary for DNA synthesis. Catalyzes the biosynthesis of deoxyribonucleotides from the corresponding ribonucleotides. The polypeptide is Ribonucleoside-diphosphate reductase subunit alpha (nrdA) (Buchnera aphidicola subsp. Acyrthosiphon pisum (strain APS) (Acyrthosiphon pisum symbiotic bacterium)).